We begin with the raw amino-acid sequence, 1380 residues long: MSSSVTSTKYVLNSFNSVPRLSYAKSIDIKDSLTDLIKIQRDSYNAFIGIDQNTESGIKNIFQSMFPIQDLLGRAVLEFVSYSIGEPQYDEYECIKRGITFSVPIRIVLRFIVWKVQEVSFKEVKYVVDEETSEKSIKYIKEQEVSIGDLPTMTSHGTFIINGIERVIVSQMHRSPGVFFDSDKGKTYSSGKLIYSARIIPYRGSWLDFEFDIKDILYFRIDRKRKLPVSLLLRALGLSNNDILDTFYDKIRYVKSEKGWVVPFVADRFRGVRLSHDLMDSDGNVLVKANTRITLRMARKLANDGLTKYLVPFNEIQGLFIANDLLDSTGNALIISAGENITSEHINKLELFNIEEIFVLNIDFLTVGPYILNTLFLDKNVSYEDALFEIYKVLRSGESPSLDTIKAFFDGLFFEKERYDLSTVGRIKLNDHLGLNVSEDITVLTKDDIIHVIKKLVLLRDGEGSVDDIDHLGNRRVRSVGEFIENQFRIGILRLERMIMDYMSSVNFDNAMPCDFVNPKVLATVLKDFFSSSQLSQFMDQTNPLSEVTHKRRLSALGPGGLTRERAGFEVRDVHPTHYGRICPIETPEGQNIGLISSLAIYARINKHGFIESPYRKVDKGVVTDKVEYLLAMQESNYYIADASATLDENNQFVDDMLYCRHDGNFVMVKREEVDYIDVSPKQIVSVAASLIPFLENNDANRALMGSNMQRQAVPLLKADAPLIGTGMESIVAAGSGTVVLAKRGGIVHRVDGLYIVIRAFDQEKNEYLGVDIYNLRKFQRSNHNTCINQRPLVKPGDYVKANDVIADGSAIDQGELALGKNVLVAFMSWQGYNFEDSIVISSEVVKKDVFTSIHIEEFECVVRDTTLGPEKIMRSVPDINEDSLSHLDDVGIVNVGAEVSAGDILVGKVTPRPPVSLPPETKLLVTIFGEKVFDCVDSSLYLPLDVEGTVVDVHVFVRRGVEENDRSLLIKQNEINGFIKERDYEIDVVSEYFYDELKRVLVSSGVQYNNQNIDDYLASIPKKEWWDINLSDEAMLLQVKDLKEKFDSMIQNAHSKFDQKIDKLNYGYDLPQGVLCIVKVFVAVKHNLQPGDKMAGRHGNKGVISRIVPVEDMPYLEDGTPVDIILNSLGVPSRMNVGQILETHLGWASVNLGKKIGHILDNLDELTVSHLRNFLYQVYDGQDLKDNIQSMSDEDLLVFAERLRDGVPMAAPVFEGPKDSQISNLLRLADLDVSGQVDLYDGRIGEKFDRKVTVGYIYMLKLHHLVDDKIHARSVGPYGLVTQQPLGGKSHFGGQRFGEMECWALQAYGAAYTLQEMLTVKSDDIVGRVKIYESIIKGDSNFECGIPESFNVMVKELRSLCLDVALKQDKDFLSNEVKD.

This sequence belongs to the RNA polymerase beta chain family. The RNAP catalytic core consists of 2 alpha, 1 beta, 1 beta' and 1 omega subunit. When a sigma factor is associated with the core the holoenzyme is formed, which can initiate transcription.

It catalyses the reaction RNA(n) + a ribonucleoside 5'-triphosphate = RNA(n+1) + diphosphate. Functionally, DNA-dependent RNA polymerase catalyzes the transcription of DNA into RNA using the four ribonucleoside triphosphates as substrates. This is DNA-directed RNA polymerase subunit beta from Ehrlichia chaffeensis (strain ATCC CRL-10679 / Arkansas).